Reading from the N-terminus, the 144-residue chain is Large ribosomal subunit protein uL13 (144 aa).

This sequence belongs to the universal ribosomal protein uL13 family. Part of the 50S ribosomal subunit.

In terms of biological role, this protein is one of the early assembly proteins of the 50S ribosomal subunit, although it is not seen to bind rRNA by itself. It is important during the early stages of 50S assembly. In Blochmanniella pennsylvanica (strain BPEN), this protein is Large ribosomal subunit protein uL13.